Reading from the N-terminus, the 216-residue chain is Pyridoxine/pyridoxamine 5'-phosphate oxidase (216 aa).

Substrate is bound by residues 9–12 and arginine 67; that span reads RLSY. FMN is bound by residues 62 to 67, 77 to 78, lysine 84, and glutamine 106; these read RIVLLR and YT. The substrate site is built by tyrosine 124, arginine 128, and serine 132. FMN contacts are provided by residues 142–143 and tryptophan 188; that span reads QS. Residue 194–196 participates in substrate binding; sequence RMH. Arginine 198 lines the FMN pocket.

The protein belongs to the pyridoxamine 5'-phosphate oxidase family. In terms of assembly, homodimer. FMN is required as a cofactor.

It catalyses the reaction pyridoxamine 5'-phosphate + O2 + H2O = pyridoxal 5'-phosphate + H2O2 + NH4(+). It carries out the reaction pyridoxine 5'-phosphate + O2 = pyridoxal 5'-phosphate + H2O2. It functions in the pathway cofactor metabolism; pyridoxal 5'-phosphate salvage; pyridoxal 5'-phosphate from pyridoxamine 5'-phosphate: step 1/1. It participates in cofactor metabolism; pyridoxal 5'-phosphate salvage; pyridoxal 5'-phosphate from pyridoxine 5'-phosphate: step 1/1. Functionally, catalyzes the oxidation of either pyridoxine 5'-phosphate (PNP) or pyridoxamine 5'-phosphate (PMP) into pyridoxal 5'-phosphate (PLP). This chain is Pyridoxine/pyridoxamine 5'-phosphate oxidase, found in Psychrobacter arcticus (strain DSM 17307 / VKM B-2377 / 273-4).